Reading from the N-terminus, the 333-residue chain is Galactinol synthase 1 (333 aa).

Residue K104 is part of the active site. 3 residues coordinate Mn(2+): D120, D122, and H257.

Belongs to the glycosyltransferase 8 family. Galactosyltransferase subfamily. The cofactor is a divalent metal cation. As to expression, expressed in source leaves, specifically in the mesophyll.

It localises to the cytoplasm. It catalyses the reaction myo-inositol + UDP-alpha-D-galactose = alpha-D-galactosyl-(1-&gt;3)-1D-myo-inositol + UDP + H(+). Its function is as follows. Major galactinol synthase mainly involved in the biosynthesis of storage raffinose family oligosaccharides (RFOs) that function as osmoprotectants. May promote plant stress tolerance. In Ajuga reptans (Bugle), this protein is Galactinol synthase 1 (GOLS1).